The sequence spans 144 residues: MHLNTLAPAPGAKKSSKRVGRGMGSGLGKTGGRGHKGQKSRSGGSVKPGFEGGQMPIQRRLPKFGFTSRKSLVSDQVTLSEIAKVEGEVVSLETLKAAGLVKKEMLFVKVLKSGEISRAVTINGLKVTKGAREAIEAAGGKVEE.

The tract at residues 1–59 (MHLNTLAPAPGAKKSSKRVGRGMGSGLGKTGGRGHKGQKSRSGGSVKPGFEGGQMPIQR) is disordered. Residues 21-31 (RGMGSGLGKTG) show a composition bias toward gly residues.

It belongs to the universal ribosomal protein uL15 family. As to quaternary structure, part of the 50S ribosomal subunit.

Functionally, binds to the 23S rRNA. The chain is Large ribosomal subunit protein uL15 from Pseudoalteromonas atlantica (strain T6c / ATCC BAA-1087).